The sequence spans 349 residues: uncharacterized protein (349 aa).

Residues 16–36 (LVITIISTGLIFGMTLVLTGL) form a helical membrane-spanning segment. Residues 111–139 (FGAPEHGPGMPRVSEGRSPSKPDEVAASS) form a disordered region. A compositionally biased stretch (basic and acidic residues) spans 124 to 134 (SEGRSPSKPDE). The next 3 helical transmembrane spans lie at 231–251 (ISIVAVLLWIVAVLIVGSVVY), 284–304 (VIALLAAVVGVVLAQVLAPLF), and 307–327 (IVAVPVGAYLALPVAAIVIGL).

Belongs to the ABC-4 integral membrane protein family. The complex is composed of two ATP-binding proteins (MT0079), two transmembrane proteins (MT0078) and a solute-binding protein.

The protein resides in the cell membrane. In terms of biological role, probably part of an ABC transporter complex. Probably responsible for the translocation of the substrate across the membrane. This is an uncharacterized protein from Mycobacterium tuberculosis (strain CDC 1551 / Oshkosh).